The primary structure comprises 506 residues: Bifunctional purine biosynthesis protein PurH (506 aa).

Residues 1 to 142 (MRAIISVYRK…KNFFRVVILV (142 aa)) form the MGS-like domain.

This sequence belongs to the PurH family.

It carries out the reaction (6R)-10-formyltetrahydrofolate + 5-amino-1-(5-phospho-beta-D-ribosyl)imidazole-4-carboxamide = 5-formamido-1-(5-phospho-D-ribosyl)imidazole-4-carboxamide + (6S)-5,6,7,8-tetrahydrofolate. The catalysed reaction is IMP + H2O = 5-formamido-1-(5-phospho-D-ribosyl)imidazole-4-carboxamide. It participates in purine metabolism; IMP biosynthesis via de novo pathway; 5-formamido-1-(5-phospho-D-ribosyl)imidazole-4-carboxamide from 5-amino-1-(5-phospho-D-ribosyl)imidazole-4-carboxamide (10-formyl THF route): step 1/1. It functions in the pathway purine metabolism; IMP biosynthesis via de novo pathway; IMP from 5-formamido-1-(5-phospho-D-ribosyl)imidazole-4-carboxamide: step 1/1. This chain is Bifunctional purine biosynthesis protein PurH, found in Aquifex aeolicus (strain VF5).